Consider the following 99-residue polypeptide: Large ribosomal subunit protein bL27 (99 aa).

A propeptide spanning residues 1 to 12 is cleaved from the precursor; sequence MMINNLEALKLF. The interval 15 to 36 is disordered; sequence HKGGGSTANGRNSAGRRLGAKR.

This sequence belongs to the bacterial ribosomal protein bL27 family. In terms of processing, the N-terminus is cleaved by ribosomal processing cysteine protease Prp.

This Lactobacillus johnsonii (strain CNCM I-12250 / La1 / NCC 533) protein is Large ribosomal subunit protein bL27.